The primary structure comprises 805 residues: Leucine--tRNA ligase (805 aa).

A 'HIGH' region motif is present at residues 40 to 51 (PYPSGAGLHVGH). Positions 576-580 (KMSKS) match the 'KMSKS' region motif. ATP is bound at residue Lys-579.

The protein belongs to the class-I aminoacyl-tRNA synthetase family.

Its subcellular location is the cytoplasm. It carries out the reaction tRNA(Leu) + L-leucine + ATP = L-leucyl-tRNA(Leu) + AMP + diphosphate. The chain is Leucine--tRNA ligase from Brevibacillus brevis (strain 47 / JCM 6285 / NBRC 100599).